We begin with the raw amino-acid sequence, 331 residues long: Protoheme IX farnesyltransferase (331 aa).

The next 8 membrane-spanning stretches (helical) occupy residues 63–83 (LACT…LNCL), 109–129 (SVFI…VSGV), 132–152 (LAAG…TAFL), 160–180 (IVFG…AAAG), 188–208 (WLFS…AILL), 215–235 (VGIP…AISV), 241–261 (VFLS…YGIL), and 294–314 (ILYM…VSIV).

Belongs to the UbiA prenyltransferase family. Protoheme IX farnesyltransferase subfamily.

The protein localises to the cell inner membrane. It carries out the reaction heme b + (2E,6E)-farnesyl diphosphate + H2O = Fe(II)-heme o + diphosphate. Its pathway is porphyrin-containing compound metabolism; heme O biosynthesis; heme O from protoheme: step 1/1. In terms of biological role, converts heme B (protoheme IX) to heme O by substitution of the vinyl group on carbon 2 of heme B porphyrin ring with a hydroxyethyl farnesyl side group. The protein is Protoheme IX farnesyltransferase of Prochlorococcus marinus (strain NATL2A).